Here is a 712-residue protein sequence, read N- to C-terminus: Polyribonucleotide nucleotidyltransferase (712 aa).

Positions 487 and 493 each coordinate Mg(2+). The 60-residue stretch at 554 to 613 folds into the KH domain; that stretch reads PKIITMTINPDKIRDVIGPSGKQINKIIEETGVKIDIEQDGTVFISSINQEMNDKAKKII. The S1 motif domain occupies 623-691; it reads GEIYEGKVKR…KQGRVNLSRK (69 aa).

It belongs to the polyribonucleotide nucleotidyltransferase family. Mg(2+) is required as a cofactor.

It localises to the cytoplasm. It carries out the reaction RNA(n+1) + phosphate = RNA(n) + a ribonucleoside 5'-diphosphate. Its function is as follows. Involved in mRNA degradation. Catalyzes the phosphorolysis of single-stranded polyribonucleotides processively in the 3'- to 5'-direction. This Bacillus anthracis protein is Polyribonucleotide nucleotidyltransferase.